The primary structure comprises 180 residues: Segregation and condensation protein B (180 aa).

This sequence belongs to the ScpB family. Homodimer. Homodimerization may be required to stabilize the binding of ScpA to the Smc head domains. Component of a cohesin-like complex composed of ScpA, ScpB and the Smc homodimer, in which ScpA and ScpB bind to the head domain of Smc. The presence of the three proteins is required for the association of the complex with DNA.

It is found in the cytoplasm. Its function is as follows. Participates in chromosomal partition during cell division. May act via the formation of a condensin-like complex containing Smc and ScpA that pull DNA away from mid-cell into both cell halves. The sequence is that of Segregation and condensation protein B from Staphylococcus aureus (strain Mu3 / ATCC 700698).